We begin with the raw amino-acid sequence, 687 residues long: MSGPSDYQPSNPALQWIERRLPILGLMHSSFVAYPTPRNLNYWWTFGAILSFMLGMQILTGVILAMHYTPHADLAFKSVELIVRDVNYGWLLRNMHACGASMFFFAVYVHMLRGLYYGSYKEPREVLWILGVIIYLLMMATGFMGYVLPWGQMSFWGATVITNLFSAIPYFGESIVTLLWGGYSVGNPTLNRFFSLHYLLPFLIAGVVVLHVWALHVAGQNNPEGVEPKSEKDTVPFTPHATIKDMFGVACFLLLYAWFIFYMPNYLGDADNYIPANPGVTPPHIVPEWYYLPFYAILRSIPNKLAGVIGMFSAIIILCFLPWLDAAKTRSSKYRPLAKQFFWIFVAVCILLGYLGAQPPEGIYVIAGRVLTVCYFAYFLIVLPLLSRIETPRPVPNSISEAILAKGGKAVASVAIALVAAGALFLGSLQDARANEGSDKPPGNKWSFAGPFGKFDRGALQRGLKVYKEVCASCHGLSYIAFRNLAEAGGPSYSVAQVAAFASDYKIKDGPNDAGDMFERPGRPADYFPSPFPNEQAARAANGGAAPPDLSLITKARSYGRGFPWFIFDFFTQYQEQGPDYVSAVLQGFEEKVPEGVTIPEGSYYNKYFPGHAIKMPKPLSDGQVTYDDGSPATVAQYSKDVTTFLMWTAEPHMEARKRLGFQVFVFLIIFAGLMYFTKKKVWADSH.

The chain crosses the membrane as a helical span at residues 46–66; that stretch reads FGAILSFMLGMQILTGVILAM. Heme b-binding residues include histidine 96 and histidine 110. Helical transmembrane passes span 126–146 and 160–180; these read VLWI…FMGY and VITN…TLLW. Heme b is bound by residues histidine 197 and histidine 211. The next 6 helical transmembrane spans lie at 199 to 219, 247 to 267, 305 to 325, 337 to 357, 363 to 383, and 410 to 430; these read LLPF…HVAG, FGVA…PNYL, LAGV…PWLD, LAKQ…YLGA, IYVI…LIVL, and AVAS…GSLQ. The interval 404–434 is internal signal sequence; it reads LAKGGKAVASVAIALVAAGALFLGSLQDARA. The Cytochrome c domain maps to 458–643; sequence GALQRGLKVY…TVAQYSKDVT (186 aa). Residues cysteine 471, cysteine 474, histidine 475, and methionine 616 each contribute to the heme c site. The chain crosses the membrane as a helical span at residues 666–678; the sequence is VFLIIFAGLMYFT.

Belongs to the cytochrome b family. In terms of assembly, the main subunits of complex b-c1 are: cytochrome b, cytochrome c1 and the Rieske protein. Heme b is required as a cofactor. Requires heme c as cofactor. In terms of processing, the protein is post-translationally processed into cytochrome b and c1. This occurs by processing between residues 434 and 435 without processing between cytochrome b and the N-terminal of the putative signal sequence domain.

Its subcellular location is the cell inner membrane. Component of the ubiquinol-cytochrome c reductase complex (complex III or cytochrome b-c1 complex), which is a respiratory chain that generates an electrochemical potential coupled to ATP synthesis. c1 functions as an electron donor to cytochrome c. The chain is Cytochrome b/c1 (fbcH) from Bradyrhizobium diazoefficiens (strain JCM 10833 / BCRC 13528 / IAM 13628 / NBRC 14792 / USDA 110).